Here is a 61-residue protein sequence, read N- to C-terminus: Small ribosomal subunit protein uS14B (61 aa).

The Zn(2+) site is built by cysteine 24, cysteine 27, cysteine 40, and cysteine 43.

The protein belongs to the universal ribosomal protein uS14 family. Zinc-binding uS14 subfamily. As to quaternary structure, part of the 30S ribosomal subunit. Contacts proteins S3 and S10. The cofactor is Zn(2+).

Binds 16S rRNA, required for the assembly of 30S particles and may also be responsible for determining the conformation of the 16S rRNA at the A site. This is Small ribosomal subunit protein uS14B from Nocardia farcinica (strain IFM 10152).